A 122-amino-acid polypeptide reads, in one-letter code: Large ribosomal subunit protein uL14c (122 aa).

Belongs to the universal ribosomal protein uL14 family. Part of the 50S ribosomal subunit.

Its subcellular location is the plastid. The protein resides in the chloroplast. Its function is as follows. Binds to 23S rRNA. This chain is Large ribosomal subunit protein uL14c, found in Physcomitrium patens (Spreading-leaved earth moss).